Consider the following 486-residue polypeptide: Cardiolipin synthase A (486 aa).

2 helical membrane passes run 3 to 23 (TFYT…IAGV) and 38 to 58 (MTWL…YFAF). 2 PLD phosphodiesterase domains span residues 219-246 (MDLR…VDPR) and 399-426 (EDGL…DMRS). Active-site residues include histidine 224, lysine 226, aspartate 231, histidine 404, lysine 406, and aspartate 411.

The protein belongs to the phospholipase D family. Cardiolipin synthase subfamily. ClsA sub-subfamily.

It localises to the cell inner membrane. It catalyses the reaction 2 a 1,2-diacyl-sn-glycero-3-phospho-(1'-sn-glycerol) = a cardiolipin + glycerol. Its function is as follows. Catalyzes the reversible phosphatidyl group transfer from one phosphatidylglycerol molecule to another to form cardiolipin (CL) (diphosphatidylglycerol) and glycerol. In Proteus mirabilis (strain HI4320), this protein is Cardiolipin synthase A.